A 364-amino-acid polypeptide reads, in one-letter code: Glutamate 5-kinase (364 aa).

Residue Lys7 participates in ATP binding. Residues Ser47, Asp134, and Asn146 each coordinate substrate. Residues 166 to 167 (TD) and 209 to 215 (TGGIKTK) each bind ATP. The PUA domain occupies 274 to 349 (QGTLHVDDGA…NRIKSTQYPV (76 aa)).

This sequence belongs to the glutamate 5-kinase family.

It localises to the cytoplasm. It carries out the reaction L-glutamate + ATP = L-glutamyl 5-phosphate + ADP. The protein operates within amino-acid biosynthesis; L-proline biosynthesis; L-glutamate 5-semialdehyde from L-glutamate: step 1/2. In terms of biological role, catalyzes the transfer of a phosphate group to glutamate to form L-glutamate 5-phosphate. This is Glutamate 5-kinase from Prochlorococcus marinus (strain SARG / CCMP1375 / SS120).